Reading from the N-terminus, the 127-residue chain is Large ribosomal subunit protein bL20 (127 aa).

Belongs to the bacterial ribosomal protein bL20 family.

Binds directly to 23S ribosomal RNA and is necessary for the in vitro assembly process of the 50S ribosomal subunit. It is not involved in the protein synthesizing functions of that subunit. This chain is Large ribosomal subunit protein bL20, found in Bifidobacterium animalis subsp. lactis (strain AD011).